The chain runs to 392 residues: Tryptophan synthase beta chain (392 aa).

Lys86 carries the post-translational modification N6-(pyridoxal phosphate)lysine.

It belongs to the TrpB family. As to quaternary structure, tetramer of two alpha and two beta chains. Pyridoxal 5'-phosphate serves as cofactor.

The enzyme catalyses (1S,2R)-1-C-(indol-3-yl)glycerol 3-phosphate + L-serine = D-glyceraldehyde 3-phosphate + L-tryptophan + H2O. It participates in amino-acid biosynthesis; L-tryptophan biosynthesis; L-tryptophan from chorismate: step 5/5. Its function is as follows. The beta subunit is responsible for the synthesis of L-tryptophan from indole and L-serine. The chain is Tryptophan synthase beta chain from Methanocorpusculum labreanum (strain ATCC 43576 / DSM 4855 / Z).